The primary structure comprises 146 residues: UPF0306 protein HD_1359 (146 aa).

Belongs to the UPF0306 family.

In Haemophilus ducreyi (strain 35000HP / ATCC 700724), this protein is UPF0306 protein HD_1359.